The sequence spans 206 residues: MPRSSRWVNQRATSKIKKFILFLGVAFVFYLYRYPSSPSTVEQSSTSIYNISVKDIEGKDVSLSKFTGKVLLIVNVASKCGLTHGNYKEMNILYAKYKTQGFEILAFPCNQFGSQEPGSNMEIKETVCNIFKAEFPIFDKIEVNGKNTCPLYNFLKEQKGGLFGDAIKWNFAKFLVDRQGNVVDRYAPTTSPLEIEKDIVKLLASA.

The transit peptide at 1-12 (MPRSSRWVNQRA) directs the protein to the mitochondrion. The active site involves Cys80.

It belongs to the glutathione peroxidase family. As to quaternary structure, interacts with ABI1 and ABI2. As to expression, ubiquitous.

Its subcellular location is the mitochondrion. It carries out the reaction 2 glutathione + H2O2 = glutathione disulfide + 2 H2O. Its activity is regulated as follows. The redox states are modulated by H(2)O(2). Functionally, may constitute a glutathione peroxidase-like protective system against oxidative stresses. Involved positively in abscisic acid (ABA) signaling pathway that regulates numerous ABA responses, such as stomatal closure, seed germination and inhibition of vegetative growth. Oxidizes and represses target proteins (e.g. the phosphatase activity of ABI1 and ABI2) when oxidized by H(2)O(2), probably after ABA signaling. Modulates the calcium channel activity in guard cells in response to ABA or H(2)O(2). Confers tolerance to drought stress, by enhancing the ABA-dependent stomatal closure. This Arabidopsis thaliana (Mouse-ear cress) protein is Probable glutathione peroxidase 3, mitochondrial (GPX3).